A 413-amino-acid chain; its full sequence is uncharacterized protein (413 aa).

A signal peptide spans 1–20 (MRVIIVIMMVVFVVVGTSSG).

This is an uncharacterized protein from Archaeoglobus fulgidus (strain ATCC 49558 / DSM 4304 / JCM 9628 / NBRC 100126 / VC-16).